A 407-amino-acid polypeptide reads, in one-letter code: Histone acetyltransferase mst2 (407 aa).

Positions 98–372 (PQPTSIRYLY…VNPKLLRWTP (275 aa)) constitute an MYST-type HAT domain. The C2HC MYST-type zinc finger occupies 131–156 (LYICESCLKYMNSDHVLQRHKMKCSW). Lysine 198 is modified (N6-acetyllysine; by autocatalysis). Acetyl-CoA-binding positions include 241–243 (ILT), threonine 243, and 248–254 (QRRGYGV). Glutamate 274 acts as the Proton donor/acceptor in catalysis. Positions 278 and 287 each coordinate acetyl-CoA.

The protein belongs to the MYST (SAS/MOZ) family. In terms of assembly, component of the mst2 complex composed of at least eaf6, mst2, nto1, pdp3, ptf1, ptf2 and tfg3. Post-translationally, autoacetylation at Lys-198 is required for proper function.

It localises to the cytoplasm. The protein localises to the nucleus. It carries out the reaction L-lysyl-[protein] + acetyl-CoA = N(6)-acetyl-L-lysyl-[protein] + CoA + H(+). Component of the mst2 complex which is a highly specific H3 lysine 14 (H3K14) acetyltransferase that functions together with gcn5 to regulate global levels of H3K14 acetylation (H3K14ac), critical for DNA damage checkpoint activation. Negatively regulates telomere silencing. Telomere silencing is increased due to histone hypoacetylation and/or an increase in the ratio of methylated histones to acetylated histones. Telomeric histone acetylation contributes to normal meiotic progression. This chain is Histone acetyltransferase mst2 (mst2), found in Schizosaccharomyces pombe (strain 972 / ATCC 24843) (Fission yeast).